The chain runs to 417 residues: MSQPPINPLGQPQVPAAASPSGQPSVVKRLKTSSTGLFKRFITVPDKYPKMRYVYDTGIIALAAIAILSILLTASGNSLMLYALAPALALGALGVTLLISDILDSPKAKKIGEAITAIVVPIIVLAIAAGLIAGAFVASSGTMLVFANPMFVMGLITVGLYFMSLNKLTLDYFRREHLLRMEKKTQETAEPILVTPSADDAKKIAVEKKKDLSASARMEEHEASQRQDARHRRIGREAQGSFFYSSRNPEHRRSFGSLSRFKTKPSDAASTRPASISPPFKDDFQPYHFKDLRSSSFGSGASSAFTPIMPASSRSPNFSTGTVLHPEPVYPKGGKEPSIPRVSSSSRRSPRDRQDKQQQQQNQDEEQKQQSKKKSGKSNQSLKTPPPDGKSTANLSPSNPFSDGYDEREKRKHRKNK.

Residues 1–24 (MSQPPINPLGQPQVPAAASPSGQP) are disordered. Helical transmembrane passes span 54 to 74 (VYDTGIIALAAIAILSILLTA), 79 to 99 (LMLYALAPALALGALGVTLLI), 117 to 137 (AIVVPIIVLAIAAGLIAGAFV), and 143 to 163 (MLVFANPMFVMGLITVGLYFM). The span at 211–228 (DLSASARMEEHEASQRQD) shows a compositional bias: basic and acidic residues. Disordered regions lie at residues 211 to 283 (DLSA…FKDD) and 308 to 417 (IMPA…RKNK). The span at 312-322 (SSRSPNFSTGT) shows a compositional bias: polar residues. A compositionally biased stretch (low complexity) spans 336-347 (EPSIPRVSSSSR). Positions 391–401 (STANLSPSNPF) are enriched in polar residues.

Belongs to the chlamydial CPn_0443/CT_005/TC_0273 family.

Its subcellular location is the cell membrane. This is an uncharacterized protein from Chlamydia pneumoniae (Chlamydophila pneumoniae).